The following is a 255-amino-acid chain: 5'-nucleotidase SurE (255 aa).

D8, D9, S40, and N93 together coordinate a divalent metal cation.

Belongs to the SurE nucleotidase family. A divalent metal cation serves as cofactor.

It localises to the cytoplasm. The enzyme catalyses a ribonucleoside 5'-phosphate + H2O = a ribonucleoside + phosphate. Its function is as follows. Nucleotidase that shows phosphatase activity on nucleoside 5'-monophosphates. The sequence is that of 5'-nucleotidase SurE from Bradyrhizobium sp. (strain BTAi1 / ATCC BAA-1182).